Reading from the N-terminus, the 406-residue chain is Cysteine desulfurase (406 aa).

The residue at position 226 (Lys-226) is an N6-(pyridoxal phosphate)lysine. The Cysteine persulfide intermediate role is filled by Cys-364.

Belongs to the class-V pyridoxal-phosphate-dependent aminotransferase family. Csd subfamily. As to quaternary structure, homodimer. Interacts with SufE and the SufBCD complex composed of SufB, SufC and SufD. The interaction with SufE is required to mediate the direct transfer of the sulfur atom from the S-sulfanylcysteine. Pyridoxal 5'-phosphate is required as a cofactor.

The protein resides in the cytoplasm. The enzyme catalyses (sulfur carrier)-H + L-cysteine = (sulfur carrier)-SH + L-alanine. It catalyses the reaction L-selenocysteine + AH2 = hydrogenselenide + L-alanine + A + H(+). It participates in cofactor biosynthesis; iron-sulfur cluster biosynthesis. Its function is as follows. Cysteine desulfurases mobilize the sulfur from L-cysteine to yield L-alanine, an essential step in sulfur metabolism for biosynthesis of a variety of sulfur-containing biomolecules. Component of the suf operon, which is activated and required under specific conditions such as oxidative stress and iron limitation. Acts as a potent selenocysteine lyase in vitro, that mobilizes selenium from L-selenocysteine. Selenocysteine lyase activity is however unsure in vivo. This chain is Cysteine desulfurase, found in Escherichia coli (strain K12 / MC4100 / BW2952).